The primary structure comprises 264 residues: Merozoite surface protein 2 (264 aa).

Positions 1–20 are cleaved as a signal peptide; sequence MKVIKTLSIINFFIFVTFNI. Asn-22 and Asn-36 each carry an N-linked (GlcNAc...) asparagine glycan. Residues 44–190 are polymorphic region; sequence ANEGSNTNSV…PQTAENENPA (147 aa). The disordered stretch occupies residues 46–227; it reads EGSNTNSVGA…QKECTDGNKE (182 aa). 2 repeat units span residues 60–91 and 92–123. The interval 60 to 123 is 2 X 32 AA perfects repeats; it reads ADTIASGSQR…GESQTTTPTA (64 aa). The segment covering 70 to 81 has biased composition (low complexity); it reads STNSASTSTTNN. A compositionally biased stretch (polar residues) spans 82-101; that stretch reads GESQTTTPTAADTIASGSQR. A compositionally biased stretch (low complexity) spans 102–145; sequence STNSASTSTTNNGESQTTTPTAADTPTATESISPSPPITTTESS. Basic and acidic residues predominate over residues 154–166; the sequence is TDGKGEESEKQNE. Asn-213 is a glycosylation site (N-linked (GlcNAc...) asparagine). Residues 217–226 are compositionally biased toward basic and acidic residues; it reads SQKECTDGNK. A disulfide bridge links Cys-221 with Cys-229. An N-linked (GlcNAc...) asparagine glycan is attached at Asn-238. The GPI-anchor amidated asparagine moiety is linked to residue Asn-238. The propeptide at 239–264 is removed in mature form; that stretch reads SSNIASINKFVVLISATLVLSFAIFI.

The protein resides in the cell membrane. In terms of biological role, may play a role in the merozoite attachment to the erythrocyte. The protein is Merozoite surface protein 2 of Plasmodium falciparum (isolate FC27 / Papua New Guinea).